Reading from the N-terminus, the 1162-residue chain is Paired amphipathic helix protein Sin3-like 5 (1162 aa).

The disordered stretch occupies residues 1 to 37 (MKRVREEVYVEPQMRGPTVSSRGETNGRPSTISGGGT). A compositionally biased stretch (polar residues) spans 18–30 (TVSSRGETNGRPS). PAH domains are found at residues 28–109 (RPST…LPKG) and 123–193 (KPVD…LPDF). Disordered regions lie at residues 702–727 (RVSDVSMGGHKVEREEGELSPTESCE), 743–779 (QKLPDNEISNTDREPKEGACGTEAVTRSNALPEDDDN), 803–830 (GGQVSSDEEHKGAESENEAGGMVNSNEG), and 1121–1143 (KKATLNPTGPENVKTSDSSELSR). Ser817 bears the Phosphoserine mark. Polar residues predominate over residues 1123-1139 (ATLNPTGPENVKTSDSS).

It is found in the nucleus. Its function is as follows. Acts as a transcriptional repressor. Plays roles in regulating gene expression and genome stability. This chain is Paired amphipathic helix protein Sin3-like 5 (SNL5), found in Arabidopsis thaliana (Mouse-ear cress).